Here is a 195-residue protein sequence, read N- to C-terminus: Glycerol-3-phosphate acyltransferase (195 aa).

5 helical membrane-spanning segments follow: residues 2–22, 52–72, 78–98, 112–132, and 145–165; these read LWIF…GLFI, YGVA…LMAY, WIFI…SIFM, VFLA…LAVI, and FAVA…VPLA.

Belongs to the PlsY family. Probably interacts with PlsX.

The protein resides in the cell inner membrane. The catalysed reaction is an acyl phosphate + sn-glycerol 3-phosphate = a 1-acyl-sn-glycero-3-phosphate + phosphate. It functions in the pathway lipid metabolism; phospholipid metabolism. Functionally, catalyzes the transfer of an acyl group from acyl-phosphate (acyl-PO(4)) to glycerol-3-phosphate (G3P) to form lysophosphatidic acid (LPA). This enzyme utilizes acyl-phosphate as fatty acyl donor, but not acyl-CoA or acyl-ACP. This Maridesulfovibrio salexigens (strain ATCC 14822 / DSM 2638 / NCIMB 8403 / VKM B-1763) (Desulfovibrio salexigens) protein is Glycerol-3-phosphate acyltransferase.